The following is a 436-amino-acid chain: Cyclic GMP-AMP synthase (436 aa).

Gln112–Tyr117 lines the GTP pocket. Mg(2+)-binding residues include Asp131 and Asp133. Arg182 serves as a coordination point for ATP. Residue Asp193 participates in Mg(2+) binding. Ser259 serves as a coordination point for ATP. GTP is bound by residues Lys287, Ser301, and Asp348. Disordered regions lie at residues Arg339–Lys358 and Ala417–Gly436. Polar residues predominate over residues Glu419–Gly436. Gly436 participates in a covalent cross-link: Glycyl lysine isopeptide (Gly-Lys) (interchain with K-? in acceptor proteins).

The protein belongs to the CD-NTase family. A01 subfamily. In terms of assembly, monomer. Interacts with Cap2 in the presence and absence of phage T2. A Cap2 dimer is bound on either side by a DncV monomer. Mg(2+) serves as cofactor. In terms of processing, in bacteria expressing capV-cdnD-cap2, this protein is conjugated to a number of other proteins (by Cap2 via this protein's C-terminal Gly residue), many of which are involved in metabolism. More conjugated protein is found in the absence of Cap3.

It catalyses the reaction GTP + ATP = 3',3'-cGAMP + 2 diphosphate. Primed for activation by Cap2 which conjugates it to cellular proteins; priming is target protein-specific (green fluorescent protein does not activate the enzyme), but which protein(s) activate is unclear. Enzymatic activity of DncV is inhibited by folate-like molecules, such as 5-methyltetrahydrofolate di-glutamate and 5-methyltetrahydrofolate, suggesting the existence of a signaling pathway that links folate-like metabolism cofactors to the regulation of cyclic dinucleotide second messenger synthesis. Lacks a regulatory loop and is constitutively activated. Functionally, cyclic nucleotide synthase (second messenger synthase) of a CBASS antivirus system. CBASS (cyclic oligonucleotide-based antiphage signaling system) provides immunity against bacteriophages. The CD-NTase protein (DncV, this protein) synthesizes cyclic nucleotides in response to infection; these serve as specific second messenger signals. The signals activate a diverse range of effectors, leading to bacterial cell death and thus abortive phage infection. A type II-A(GA) CBASS system. Its function is as follows. Catalyzes the synthesis of 3',3'-cyclic GMP-AMP (cGAMP), a second messenger in cell signal transduction, from GTP and ATP in response to phage infection. Also able to produce c-di-AMP and c-di-GMP from ATP and GTP, respectively; however, cGAMP is the dominant molecule produced by DncV in vivo, contrary to the 2'3'-cGAMP produced by eukaryotes. Is required for efficient V.cholerae intestinal colonization, and down-regulates the colonization-influencing process of chemotaxis. Is not active with dATP, TTP, UTP or CTP. Its product controls the activity of cGAMP-activated phospholipase CapV, a patatin-like lipase that is a direct cGAMP receptor encoded in the dncV operon. In terms of biological role, protects E.coli against phage infection. When the CBASS operon (capV-dncV-cap2-cap3) is introduced in E.coli MG1655 there is about 100-fold protection against phages P1 and T2. When the operon is introduced in E.coli MG1655 there is a more than 10(3) decrease in the efficiency of T2 plaque formation. Protects 100-fold against phage T5, offers no protection against T7. When the operon is introduced in E.coli MG1655 it protects against phages T2, T4, T5 and T6. Another paper shows the operon confers protection against phages P1, T2, T5 and T6 but not T4 or lambda. The sequence is that of Cyclic GMP-AMP synthase from Vibrio cholerae serotype O1 (strain ATCC 39315 / El Tor Inaba N16961).